A 645-amino-acid polypeptide reads, in one-letter code: Pro-neuregulin-1, membrane-bound isoform (645 aa).

A propeptide spanning residues 1-19 is cleaved from the precursor; sequence MSERKEGRGKGKGKKKDRG. The tract at residues 1–52 is disordered; the sequence is MSERKEGRGKGKGKKKDRGSRGKPAPAEGDPSPALPPRLKEMKSQESAAGSK. Residues 20–247 lie on the Extracellular side of the membrane; sequence SRGKPAPAEG…MEAEELYQKR (228 aa). Positions 37–128 constitute an Ig-like C2-type domain; it reads PRLKEMKSQE…GNDSASANIT (92 aa). An intrachain disulfide couples C57 to C112. Over residues 139–164 the composition is skewed to polar residues; sequence MSASTERPYVSSESPIRISVSTEGAN. The tract at residues 139 to 175 is disordered; it reads MSASTERPYVSSESPIRISVSTEGANTSSSTSTSTTG. A compositionally biased stretch (low complexity) spans 165 to 175; sequence TSSSTSTSTTG. One can recognise an EGF-like domain in the interval 178 to 222; the sequence is HLIKCAEKEKTFCVNGGECFMVKDLSNPSRYLCKCPNEFTGDRCQ. 3 disulfides stabilise this stretch: C182–C196, C190–C210, and C212–C221. A helical membrane pass occupies residues 248-268; that stretch reads VLTITGICIALLVVGIMCVVA. Over 269–645 the chain is Cytoplasmic; the sequence is YCKTKKQRQK…VIANQDPIAV (377 aa). Positions 340-355 are enriched in low complexity; that stretch reads SHYTSTAHHSTTVTQT. Disordered stretches follow at residues 340-364, 380-406, 433-463, and 531-593; these read SHYT…SNGH, SVEN…PREC, MTTP…PVSS, and ETTQ…DTPF. Over residues 392 to 402 the composition is skewed to gly residues; the sequence is GPRGRLHGLGG. The span at 547–557 shows a compositional bias: basic residues; the sequence is TNSRRAKRTKP. Residues 568-579 are compositionally biased toward low complexity; it reads DSNPSSVSSNSE.

It belongs to the neuregulin family. The cytoplasmic domain interacts with the LIM domain region of LIMK1. Forms a ternary complex with ERBB3 and ITGAV:ITGB3 or ITGA6:ITGB4. Interacts with NRDC and BACE1. Post-translationally, proteolytic cleavage close to the plasma membrane on the external face leads to the release of the soluble growth factor form. In terms of processing, N- and O-glycosylated. Extensive glycosylation precedes the proteolytic cleavage.

The protein localises to the cell membrane. It localises to the secreted. Functionally, direct ligand for ERBB3 and ERBB4 tyrosine kinase receptors. Concomitantly recruits ERBB1 and ERBB2 coreceptors, resulting in ligand-stimulated tyrosine phosphorylation and activation of the ERBB receptors. Perform diverse functions such as inducing growth and differentiation of epithelial, glial, neuronal, and skeletal muscle cells; inducing expression of acetylcholine receptor in synaptic vesicles during the formation of the neuromuscular junction; stimulating lobuloalveolar budding and milk production in the mammary gland and inducing differentiation of mammary tumor cells; stimulating Schwann cell proliferation; implication in the development of the myocardium such as trabeculation of the developing heart. Binds to ERBB4 and ERBB3. Acts as a ligand for integrins and binds (via EGF domain) to integrins ITGAV:ITGB3 or ITGA6:ITGB4. Its binding to integrins and subsequent ternary complex formation with integrins and ERRB3 are essential for NRG1-ERBB signaling. Induces the phosphorylation and activation of MAPK3/ERK1, MAPK1/ERK2 and AKT1, and ligand-dependent ERBB4 endocytosis is essential for the NRG1-mediated activation of these kinases in neurons. The sequence is that of Pro-neuregulin-1, membrane-bound isoform from Mus musculus (Mouse).